Here is a 147-residue protein sequence, read N- to C-terminus: Hemoglobin subunit deltaH (147 aa).

The region spanning 3–147 (RLTDSEKAEV…MANALAHKYH (145 aa)) is the Globin domain. 2 residues coordinate heme b: histidine 64 and histidine 93.

Belongs to the globin family. Heterotetramer of two delta chains and two alpha chains. As to expression, red blood cells.

This Heterohyrax brucei (Yellow-spotted hyrax) protein is Hemoglobin subunit deltaH.